A 436-amino-acid chain; its full sequence is UPF0597 protein YhaM (436 aa).

Belongs to the UPF0597 family.

The sequence is that of UPF0597 protein YhaM from Salmonella heidelberg (strain SL476).